Consider the following 506-residue polypeptide: FAD-linked oxidoreductase chry5 (506 aa).

A signal peptide spans 1–17 (MHLQALTGLATLAVTAA). The 183-residue stretch at 59 to 241 (LDKPTVNIVA…TSVTSKTYDA (183 aa)) folds into the FAD-binding PCMH-type domain. 5 N-linked (GlcNAc...) asparagine glycosylation sites follow: asparagine 205, asparagine 272, asparagine 281, asparagine 389, and asparagine 431.

It belongs to the oxygen-dependent FAD-linked oxidoreductase family. FAD serves as cofactor.

It participates in pigment biosynthesis. In terms of biological role, FAD-linked oxidoreductase; part of the gene cluster that mediates the biosynthesis of the yellow pigment chrysogine. Pyruvic acid and anthranilic acid are likely substrates for the nonribosomal peptide synthetase chry1/NRPS14, with pyruvic acid adenylated by the first A domain and anthranilic acid by the second. If pyruvic acid and anthranilic acid are merged and released from chry1/NRPS14 by hydrolysis, a subsequent amidation would lead to 2-pyruvoylaminobenzamide. This process is probably catalyzed by the amidotransferase chry2 using glutamine as amino donor. The dehydrogenase chry5 that has a terminal berberine bridge domain for C-N cyclization could catalyze the cyclization of 2-pyruvoylaminobenzamide to yield acetyl-4(3H)-quinazolidinone. A final reduction of acetyl-4(3H)-quinazolidinone catalyzed by the oxidoreductase chry4 would result in chrysogine. This Gibberella zeae (strain ATCC MYA-4620 / CBS 123657 / FGSC 9075 / NRRL 31084 / PH-1) (Wheat head blight fungus) protein is FAD-linked oxidoreductase chry5.